Here is a 63-residue protein sequence, read N- to C-terminus: DNA-directed RNA polymerase 7 kDa subunit (63 aa).

This sequence belongs to the poxviridae DNA-directed RNA polymerase 7 kDa subunit family. As to quaternary structure, the DNA-dependent RNA polymerase used for intermediate and late genes expression consists of eight subunits 147 kDa, 133 kDa, 35 kDa, 30 kDa, 22 kDa, 19 kDa, 18 kDa and 7 kDa totalling more than 500 kDa in mass. The same holoenzyme, with the addition of the transcription-specificity factor RAP94, is used for early gene expression.

It is found in the virion. The enzyme catalyses RNA(n) + a ribonucleoside 5'-triphosphate = RNA(n+1) + diphosphate. Its function is as follows. Part of the DNA-dependent RNA polymerase which catalyzes the transcription of viral DNA into RNA using the four ribonucleoside triphosphates as substrates. Responsible for the transcription of early, intermediate and late genes. DNA-dependent RNA polymerase associates with the early transcription factor (ETF) thereby allowing the early genes transcription. Late transcription, and probably also intermediate transcription, require newly synthesized RNA polymerase. The polypeptide is DNA-directed RNA polymerase 7 kDa subunit (RPO7) (Molluscum contagiosum virus subtype 1 (MOCV)).